The following is a 289-amino-acid chain: Lipoyl synthase 1 (289 aa).

Cys33, Cys38, Cys44, Cys59, Cys63, Cys66, and Ser274 together coordinate [4Fe-4S] cluster. A Radical SAM core domain is found at 45–263 (FAGGTATFLI…RIGEEELGFL (219 aa)).

It belongs to the radical SAM superfamily. Lipoyl synthase family. The cofactor is [4Fe-4S] cluster.

The protein resides in the cytoplasm. It catalyses the reaction [[Fe-S] cluster scaffold protein carrying a second [4Fe-4S](2+) cluster] + N(6)-octanoyl-L-lysyl-[protein] + 2 oxidized [2Fe-2S]-[ferredoxin] + 2 S-adenosyl-L-methionine + 4 H(+) = [[Fe-S] cluster scaffold protein] + N(6)-[(R)-dihydrolipoyl]-L-lysyl-[protein] + 4 Fe(3+) + 2 hydrogen sulfide + 2 5'-deoxyadenosine + 2 L-methionine + 2 reduced [2Fe-2S]-[ferredoxin]. Its pathway is protein modification; protein lipoylation via endogenous pathway; protein N(6)-(lipoyl)lysine from octanoyl-[acyl-carrier-protein]: step 2/2. Catalyzes the radical-mediated insertion of two sulfur atoms into the C-6 and C-8 positions of the octanoyl moiety bound to the lipoyl domains of lipoate-dependent enzymes, thereby converting the octanoylated domains into lipoylated derivatives. The chain is Lipoyl synthase 1 from Parasynechococcus marenigrum (strain WH8102).